The chain runs to 385 residues: Cytochrome b (385 aa).

The next 4 helical transmembrane spans lie at 32–52, 76–98, 113–133, and 179–199; these read FGSL…TLAM, WLVR…LHIG, TWAI…LGYV, and FFAL…MHLI. Residues H82 and H96 each coordinate heme b. Heme b-binding residues include H183 and H197. H202 is an a ubiquinone binding site. Transmembrane regions (helical) follow at residues 226–246, 290–310, 322–342, and 349–369; these read FIFK…IFVF, LLGV…PITD, LSKV…QIGA, and FIEL…VIVP.

Belongs to the cytochrome b family. As to quaternary structure, fungal cytochrome b-c1 complex contains 10 subunits; 3 respiratory subunits, 2 core proteins and 5 low-molecular weight proteins. Cytochrome b-c1 complex is a homodimer. Heme b serves as cofactor.

It is found in the mitochondrion inner membrane. Its function is as follows. Component of the ubiquinol-cytochrome c reductase complex (complex III or cytochrome b-c1 complex) that is part of the mitochondrial respiratory chain. The b-c1 complex mediates electron transfer from ubiquinol to cytochrome c. Contributes to the generation of a proton gradient across the mitochondrial membrane that is then used for ATP synthesis. The protein is Cytochrome b (cob) of Aspergillus tubingensis.